The sequence spans 400 residues: Tryptophan synthase beta chain (400 aa).

Lys91 bears the N6-(pyridoxal phosphate)lysine mark.

It belongs to the TrpB family. As to quaternary structure, tetramer of two alpha and two beta chains. It depends on pyridoxal 5'-phosphate as a cofactor.

The catalysed reaction is (1S,2R)-1-C-(indol-3-yl)glycerol 3-phosphate + L-serine = D-glyceraldehyde 3-phosphate + L-tryptophan + H2O. It participates in amino-acid biosynthesis; L-tryptophan biosynthesis; L-tryptophan from chorismate: step 5/5. Functionally, the beta subunit is responsible for the synthesis of L-tryptophan from indole and L-serine. This chain is Tryptophan synthase beta chain, found in Listeria monocytogenes serotype 4a (strain HCC23).